A 790-amino-acid polypeptide reads, in one-letter code: MRTYHCFWLLFWAGQPHQSFLTLLSKRTSGFPEKEKVLVLSGNSRRDLSRSKRSWMWNQFFLLEEYTGTDYQYVGKLHSDQDKGDGSLKYILSGDGAGDLFIINENTGDIQATKRLDREEKPVYILRAQAINRRTGRPVEPESEFIIKIHDINDNEPMFTKDVYNASIPEMSDVGTFVVQVTATDADDPTYGNSAKVVYSILQGQPYFSVESETGIIKTALLNMDRENREQYQVVIQAKDMGGQMGGLSGTTTVNITLTDVNDNPPRFPQSTYQFRAPESTPPDSPIGRIKANDADVDENAEIEYSITEGDGYDMFGITTDKDTQEGIITVKKALDFENKNLYILKVEATNTHVDPRFLYLGPFKDSATIRIQVEDVDEPPVFSRPAYIIEVKEDVPINSVIGTVTAQDPDAAKNPVKYSVDRHTDMDRVFNINSGNGSIFTSKTLDRETLLWHNITVIAAEINNPKQSSRVPVFIKVLDVNDNAPEFAMFYETFVCENAKAEQLIQTLSAVDKDDSYSGHQFSFSIAPEAASSSNFTLQDNRDNTAGIFTRKIRYNRHEMSTYLLPVVISDNDYPIQSSTETVTIRVCACDHRGKMLSCNAEALIHPTGLSTGALIAILLCIIILLVTVVLFAALRRQRKKEPLIISKEDIRDNIVSYNDEGGGEEDTQAFDIGTLRNPEAIDDNKLRRDIVPETLFMPRRTATARDNTDVRDFINQRLKENDTDPAAPPYDSLATYAYEGNGSVAESLSSLESVTTDGDQDYDYLSDWGPRFKKLADMYGSMDSDKDS.

The signal sequence occupies residues M1–G30. Residues F31–R53 constitute a propeptide that is removed on maturation. 5 Cadherin domains span residues S54 to F159, T160 to F268, P269 to F383, S384 to P486, and E487 to P608. Residues S54–A615 are Extracellular-facing. N-linked (GlcNAc...) asparagine glycans are attached at residues N165 and N255. The segment at V261–R289 is disordered. 3 N-linked (GlcNAc...) asparagine glycosylation sites follow: N437, N455, and N536. Residues L616–L636 form a helical membrane-spanning segment. At R637–S790 the chain is on the cytoplasmic side.

The protein localises to the cell membrane. Cadherins are calcium-dependent cell adhesion proteins. They preferentially interact with themselves in a homophilic manner in connecting cells; cadherins may thus contribute to the sorting of heterogeneous cell types. In Gallus gallus (Chicken), this protein is Cadherin-6 (CDH6).